The primary structure comprises 170 residues: MKKVFILLALKYYILNSIIRNGENLYKKIVIPTDGSDVSLEAAKHAINIAKEFDAEVYAIYVVDVSPFVGLPAEGSWELISELLKEEGQEALKKVKKMAEEWGVKIHTEMLEGVPANEIVEFAEKKKADLIVMGTTGKTGLERILLGSVAERVIKNAHCPVLVVKKPKKE.

The protein belongs to the universal stress protein A family.

This is Universal stress protein MJ0531 from Methanocaldococcus jannaschii (strain ATCC 43067 / DSM 2661 / JAL-1 / JCM 10045 / NBRC 100440) (Methanococcus jannaschii).